The sequence spans 342 residues: Holliday junction branch migration complex subunit RuvB (342 aa).

A large ATPase domain (RuvB-L) region spans residues 1–184 (MDNERVITAV…FGIVQRLEFY (184 aa)). ATP contacts are provided by residues I23, R24, G65, K68, T69, T70, 131–133 (EDY), R174, Y184, and R221. A Mg(2+)-binding site is contributed by T69. The small ATPAse domain (RuvB-S) stretch occupies residues 185 to 255 (SVDDLSGIVS…IAQRALDMLE (71 aa)). Positions 258 to 342 (SCGLDGTDRR…PRQDGDLFND (85 aa)) are head domain (RuvB-H). R313 and R318 together coordinate DNA.

This sequence belongs to the RuvB family. In terms of assembly, homohexamer. Forms an RuvA(8)-RuvB(12)-Holliday junction (HJ) complex. HJ DNA is sandwiched between 2 RuvA tetramers; dsDNA enters through RuvA and exits via RuvB. An RuvB hexamer assembles on each DNA strand where it exits the tetramer. Each RuvB hexamer is contacted by two RuvA subunits (via domain III) on 2 adjacent RuvB subunits; this complex drives branch migration. In the full resolvosome a probable DNA-RuvA(4)-RuvB(12)-RuvC(2) complex forms which resolves the HJ.

Its subcellular location is the cytoplasm. It catalyses the reaction ATP + H2O = ADP + phosphate + H(+). The RuvA-RuvB-RuvC complex processes Holliday junction (HJ) DNA during genetic recombination and DNA repair, while the RuvA-RuvB complex plays an important role in the rescue of blocked DNA replication forks via replication fork reversal (RFR). RuvA specifically binds to HJ cruciform DNA, conferring on it an open structure. The RuvB hexamer acts as an ATP-dependent pump, pulling dsDNA into and through the RuvAB complex. RuvB forms 2 homohexamers on either side of HJ DNA bound by 1 or 2 RuvA tetramers; 4 subunits per hexamer contact DNA at a time. Coordinated motions by a converter formed by DNA-disengaged RuvB subunits stimulates ATP hydrolysis and nucleotide exchange. Immobilization of the converter enables RuvB to convert the ATP-contained energy into a lever motion, pulling 2 nucleotides of DNA out of the RuvA tetramer per ATP hydrolyzed, thus driving DNA branch migration. The RuvB motors rotate together with the DNA substrate, which together with the progressing nucleotide cycle form the mechanistic basis for DNA recombination by continuous HJ branch migration. Branch migration allows RuvC to scan DNA until it finds its consensus sequence, where it cleaves and resolves cruciform DNA. The sequence is that of Holliday junction branch migration complex subunit RuvB from Alcanivorax borkumensis (strain ATCC 700651 / DSM 11573 / NCIMB 13689 / SK2).